The sequence spans 168 residues: Protein-export protein SecB (168 aa).

It belongs to the SecB family. Homotetramer, a dimer of dimers. One homotetramer interacts with 1 SecA dimer.

The protein localises to the cytoplasm. Its function is as follows. One of the proteins required for the normal export of preproteins out of the cell cytoplasm. It is a molecular chaperone that binds to a subset of precursor proteins, maintaining them in a translocation-competent state. It also specifically binds to its receptor SecA. The polypeptide is Protein-export protein SecB (Rhizobium meliloti (strain 1021) (Ensifer meliloti)).